The sequence spans 883 residues: Putative pentatricopeptide repeat-containing protein At1g13800 (883 aa).

PPR repeat units lie at residues 145-180, 181-215, 216-251, 253-285, 290-324, 325-359, 360-394, 395-429, 430-464, 465-499, 500-534, 537-561, 563-598, 599-633, 634-668, 697-731, 760-794, 795-829, and 830-864; these read LIRV…GRAP, DIKA…GLDA, DAHT…TRNP, VFYL…NILV, LGIA…GIDP, DVYV…RKRI, NCVI…NISL, DRVC…GIAP, DVIN…GKTP, DIVI…GVKP, TYVT…SREN, SMVK…LEFP, PKSV…GVEP, EKSM…KIVP, DLFT…DVKP, DVVY…EIVP, DVFY…GVDP, DAAP…GVKP, and DVVP…GIKP.

It belongs to the PPR family. P subfamily.

This Arabidopsis thaliana (Mouse-ear cress) protein is Putative pentatricopeptide repeat-containing protein At1g13800.